The primary structure comprises 216 residues: Enolase-phosphatase E1 (216 aa).

Asp-8 and Glu-10 together coordinate Mg(2+). Residues Ser-115–Ser-116 and Lys-149 contribute to the substrate site. Asp-172 is a binding site for Mg(2+).

Belongs to the HAD-like hydrolase superfamily. MasA/MtnC family. As to quaternary structure, monomer. Requires Mg(2+) as cofactor.

It is found in the cytoplasm. It localises to the nucleus. The enzyme catalyses 5-methylsulfanyl-2,3-dioxopentyl phosphate + H2O = 1,2-dihydroxy-5-(methylsulfanyl)pent-1-en-3-one + phosphate. It functions in the pathway amino-acid biosynthesis; L-methionine biosynthesis via salvage pathway; L-methionine from S-methyl-5-thio-alpha-D-ribose 1-phosphate: step 3/6. Its pathway is amino-acid biosynthesis; L-methionine biosynthesis via salvage pathway; L-methionine from S-methyl-5-thio-alpha-D-ribose 1-phosphate: step 4/6. Functionally, bifunctional enzyme that catalyzes the enolization of 2,3-diketo-5-methylthiopentyl-1-phosphate (DK-MTP-1-P) into the intermediate 2-hydroxy-3-keto-5-methylthiopentenyl-1-phosphate (HK-MTPenyl-1-P), which is then dephosphorylated to form the acireductone 1,2-dihydroxy-3-keto-5-methylthiopentene (DHK-MTPene). In Schizosaccharomyces pombe (strain 972 / ATCC 24843) (Fission yeast), this protein is Enolase-phosphatase E1 (utr4).